The following is a 200-amino-acid chain: Pyridoxine/pyridoxamine 5'-phosphate oxidase (200 aa).

Residues 49–54 (RMLLLK), 64–65 (YT), R70, K71, and Q93 each bind FMN. Residue K54 coordinates substrate. Substrate-binding residues include Y111, R115, and S119. FMN-binding positions include 128 to 129 (QS) and W173. 179–181 (RLH) lines the substrate pocket. Residue R183 participates in FMN binding.

Belongs to the pyridoxamine 5'-phosphate oxidase family. Homodimer. FMN is required as a cofactor.

It catalyses the reaction pyridoxamine 5'-phosphate + O2 + H2O = pyridoxal 5'-phosphate + H2O2 + NH4(+). It carries out the reaction pyridoxine 5'-phosphate + O2 = pyridoxal 5'-phosphate + H2O2. It functions in the pathway cofactor metabolism; pyridoxal 5'-phosphate salvage; pyridoxal 5'-phosphate from pyridoxamine 5'-phosphate: step 1/1. It participates in cofactor metabolism; pyridoxal 5'-phosphate salvage; pyridoxal 5'-phosphate from pyridoxine 5'-phosphate: step 1/1. In terms of biological role, catalyzes the oxidation of either pyridoxine 5'-phosphate (PNP) or pyridoxamine 5'-phosphate (PMP) into pyridoxal 5'-phosphate (PLP). The polypeptide is Pyridoxine/pyridoxamine 5'-phosphate oxidase (Gluconobacter oxydans (strain 621H) (Gluconobacter suboxydans)).